The primary structure comprises 222 residues: 7-cyano-7-deazaguanine synthase (222 aa).

7–17 (LSGGMDSAVAT) lines the ATP pocket. 4 residues coordinate Zn(2+): Cys-188, Cys-196, Cys-199, and Cys-202.

This sequence belongs to the QueC family. It depends on Zn(2+) as a cofactor.

It carries out the reaction 7-carboxy-7-deazaguanine + NH4(+) + ATP = 7-cyano-7-deazaguanine + ADP + phosphate + H2O + H(+). It participates in purine metabolism; 7-cyano-7-deazaguanine biosynthesis. Catalyzes the ATP-dependent conversion of 7-carboxy-7-deazaguanine (CDG) to 7-cyano-7-deazaguanine (preQ(0)). The protein is 7-cyano-7-deazaguanine synthase of Methanothermobacter thermautotrophicus (strain ATCC 29096 / DSM 1053 / JCM 10044 / NBRC 100330 / Delta H) (Methanobacterium thermoautotrophicum).